Here is a 296-residue protein sequence, read N- to C-terminus: 4-diphosphocytidyl-2-C-methyl-D-erythritol kinase (296 aa).

Lysine 11 is an active-site residue. 96–106 (PVSSGLAGGSA) serves as a coordination point for ATP. The active site involves aspartate 136.

Belongs to the GHMP kinase family. IspE subfamily.

The enzyme catalyses 4-CDP-2-C-methyl-D-erythritol + ATP = 4-CDP-2-C-methyl-D-erythritol 2-phosphate + ADP + H(+). It functions in the pathway isoprenoid biosynthesis; isopentenyl diphosphate biosynthesis via DXP pathway; isopentenyl diphosphate from 1-deoxy-D-xylulose 5-phosphate: step 3/6. In terms of biological role, catalyzes the phosphorylation of the position 2 hydroxy group of 4-diphosphocytidyl-2C-methyl-D-erythritol. This is 4-diphosphocytidyl-2-C-methyl-D-erythritol kinase from Anaplasma phagocytophilum (strain HZ).